Reading from the N-terminus, the 671-residue chain is Heat shock transcription factor hsf-1 (671 aa).

Composition is skewed to low complexity over residues 1-17 (MQPTGNQIQQNQQQQQQ) and 38-52 (QQAPPNRPPRQNHQN). The disordered stretch occupies residues 1 to 61 (MQPTGNQIQQ…NGAIGGKKSS (61 aa)). Residues 89–196 (LPVFLIKLWN…LLSQIKRKQS (108 aa)) form a DNA-binding domain region. Residues 206-240 (NEQTQQNLEVVMAEMRAMREKAKNMEDKMNKLTKE) adopt a coiled-coil conformation. Disordered regions lie at residues 329–423 (QEPF…PLTH), 437–493 (YQGA…VNNY), 526–552 (HHPTTSTSSTNADPHQNLYSPTLGLSP), and 612–671 (NAPE…PNLV). Polar residues predominate over residues 370–386 (GAQSSRYSDGGATSSRE). The segment covering 439–456 (GASPASGGPSTSSSAPSG) has biased composition (low complexity). Composition is skewed to polar residues over residues 474–493 (ATRQMAQPQQDYSGGFVNNY) and 528–552 (PTTSTSSTNADPHQNLYSPTLGLSP).

Belongs to the HSF family. In terms of assembly, forms homodimers and homotrimers. Component of the DHIC (ddl-1-containing hsf-1 inhibitory complex), which contains at least ddl-1, ddl-2, hsb-1 and hsf-1. Within the complex, interacts with ddl-1. Formation of the DHIC may be dependent upon the Insulin/IGF-1-like signaling (IIS) mediated pathway. Post-translationally, phosphorylated. Sumoylated. Sumoylation may inhibit transcriptional activity in response to heat shock. As to expression, expressed in intestinal cells, body wall muscle cells, and hypodermal cells, as well as many neurons in the head and tail.

The protein localises to the nucleus. The protein resides in the cytoplasm. Its function is as follows. Functions as a stress-inducible and DNA-binding transcription factor, playing a central role in the transcriptional activation of the heat shock response (HSR), leading to the expression of a large class of molecular chaperones, heat shock proteins (HSPs), that protect cells from cellular insult damage. Upon exposure to heat and other stress stimuli, activates gene transcription through binding to site-specific heat shock elements (HSEs) present in the promoter regions of target genes, such as the HSPs. Binds to inverted 5'-NGAAN-3' pentamer DNA sequences in HSEs. Involved in positive modulation of expression of heat shock protein hsp-16.2 in response to heat shock; may act in concert with homeodomain-interacting protein kinase hpk-1. In response to heat shock or starvation, required for the modulation of lifespan, and protection against aberrant protein aggregation proteotoxicity; may act in parallel with the Insulin/IGF-1-like signaling (IIS) mediated pathway. Plays a role in modulating autophagy, in response to a moderate and short-term heat shock, also known as a hormetic heat shock. Involved in positive modulation of ascaroside pheromone biosynthesis in response to heat shock, perhaps by directly activating transcription of peroxisomal fatty acid beta-oxidation genes. Required in modulating the response to infection by either Gram-negative or Gram-positive bacteria, perhaps acting via regulation of expression of Hsp90/daf-21 and members of the small heat shock protein (HSP20) family. May play a role downstream of the daf-16/FOXO and daf-2 signaling pathway in response to bacterial pathogens. Modulates expression of multiple microRNA genes, in both heat shock-dependent and -independent manner. Independent of heat shock, required to modulate expression of genes involved in larval development, mainly distinct from HSPs; acts in concert with putative transcription factor efl-1/E2F, which may form part of a multiprotein DRM complex. Independent of heat shock, involved in promoting death of the linker cell, a male-specific cell which guides the elongation of the gonad; perhaps acting by modulating expression of ubiquitin-conjugating enzyme let-70. Plays a role in egg-laying. The polypeptide is Heat shock transcription factor hsf-1 (Caenorhabditis elegans).